We begin with the raw amino-acid sequence, 66 residues long: Large ribosomal subunit protein bL32 (66 aa).

The disordered stretch occupies residues 1-20 (MAVPKRRKSKSKVRTKRAHH).

The protein belongs to the bacterial ribosomal protein bL32 family.

The polypeptide is Large ribosomal subunit protein bL32 (Leptospira borgpetersenii serovar Hardjo-bovis (strain JB197)).